The sequence spans 406 residues: Formate-dependent phosphoribosylglycinamide formyltransferase (406 aa).

N(1)-(5-phospho-beta-D-ribosyl)glycinamide-binding positions include 27–28 (EL) and Glu-87. ATP contacts are provided by residues Arg-120, Lys-162, 167–172 (SSGKGQ), 202–205 (EGFI), and Glu-210. One can recognise an ATP-grasp domain in the interval 125–320 (RLAAETLGLP…EFELHARALL (196 aa)). Residues Glu-279 and Glu-291 each contribute to the Mg(2+) site. N(1)-(5-phospho-beta-D-ribosyl)glycinamide contacts are provided by residues Asp-298, Lys-367, and 374–375 (RR).

The protein belongs to the PurK/PurT family. In terms of assembly, homodimer.

The enzyme catalyses N(1)-(5-phospho-beta-D-ribosyl)glycinamide + formate + ATP = N(2)-formyl-N(1)-(5-phospho-beta-D-ribosyl)glycinamide + ADP + phosphate + H(+). It functions in the pathway purine metabolism; IMP biosynthesis via de novo pathway; N(2)-formyl-N(1)-(5-phospho-D-ribosyl)glycinamide from N(1)-(5-phospho-D-ribosyl)glycinamide (formate route): step 1/1. In terms of biological role, involved in the de novo purine biosynthesis. Catalyzes the transfer of formate to 5-phospho-ribosyl-glycinamide (GAR), producing 5-phospho-ribosyl-N-formylglycinamide (FGAR). Formate is provided by PurU via hydrolysis of 10-formyl-tetrahydrofolate. The protein is Formate-dependent phosphoribosylglycinamide formyltransferase of Bordetella parapertussis (strain 12822 / ATCC BAA-587 / NCTC 13253).